We begin with the raw amino-acid sequence, 306 residues long: Aspartate carbamoyltransferase catalytic subunit (306 aa).

Carbamoyl phosphate is bound by residues Arg-49 and Thr-50. Lys-77 provides a ligand contact to L-aspartate. Residues Arg-99, His-127, and Gln-130 each coordinate carbamoyl phosphate. Positions 160 and 211 each coordinate L-aspartate. Carbamoyl phosphate contacts are provided by Ala-250 and Pro-251.

Belongs to the aspartate/ornithine carbamoyltransferase superfamily. ATCase family. In terms of assembly, heterododecamer (2C3:3R2) of six catalytic PyrB chains organized as two trimers (C3), and six regulatory PyrI chains organized as three dimers (R2).

The catalysed reaction is carbamoyl phosphate + L-aspartate = N-carbamoyl-L-aspartate + phosphate + H(+). Its pathway is pyrimidine metabolism; UMP biosynthesis via de novo pathway; (S)-dihydroorotate from bicarbonate: step 2/3. Catalyzes the condensation of carbamoyl phosphate and aspartate to form carbamoyl aspartate and inorganic phosphate, the committed step in the de novo pyrimidine nucleotide biosynthesis pathway. This Bacillus licheniformis (strain ATCC 14580 / DSM 13 / JCM 2505 / CCUG 7422 / NBRC 12200 / NCIMB 9375 / NCTC 10341 / NRRL NRS-1264 / Gibson 46) protein is Aspartate carbamoyltransferase catalytic subunit.